Consider the following 253-residue polypeptide: Testis-expressed protein 47 (253 aa).

The protein is Testis-expressed protein 47 (Tex47) of Mus musculus (Mouse).